Reading from the N-terminus, the 303-residue chain is Sushi domain-containing protein 6 (303 aa).

Positions 1 to 39 (MCHGRIAPKSTSVFAVASVGHGVFLPLVILCTLLGDGLA) are cleaved as a signal peptide. The Sushi domain occupies 40–104 (SVCPLPPEPE…KPAMEISCRL (65 aa)). The Extracellular segment spans residues 40–120 (SVCPLPPEPE…HTSLGVPTLS (81 aa)). 2 cysteine pairs are disulfide-bonded: Cys-42–Cys-89 and Cys-74–Cys-102. The helical transmembrane segment at 121-141 (IVASTASSVALILLLVVLFVL) threads the bilayer. Topologically, residues 142 to 303 (LQPKLKSFHH…TDDIPLLKEA (162 aa)) are cytoplasmic. Disordered stretches follow at residues 199–237 (VLSEGSGPSGRSVPREQQLPDQGACSSAGGEDEAPGQSG) and 263–282 (GSGNRQLAHKETADSENSDI).

Its subcellular location is the membrane. Its function is as follows. May play a role in growth-suppressive activity and cell death. May be involved in the production of chemokine molecules in umbilical vein endothelial cells (HUVECs) cultured in THP1 monocyte LPS-induced medium. Plays a role in preventing tumor onset. The protein is Sushi domain-containing protein 6 of Homo sapiens (Human).